We begin with the raw amino-acid sequence, 537 residues long: Frizzled-4 (537 aa).

Residues 1–36 (MAWRGAGPSVPGAPGGVGLSLGLLLQLLLLLGPARG) form the signal peptide. Residues 37 to 212 (FGDEEERRCD…KCGYDAGLYS (176 aa)) lie on the Extracellular side of the membrane. The FZ domain occupies 40 to 161 (EEERRCDPIR…NDHNHMCMEG (122 aa)). Disulfide bonds link cysteine 45–cysteine 106, cysteine 53–cysteine 99, cysteine 90–cysteine 128, cysteine 117–cysteine 158, cysteine 121–cysteine 145, cysteine 181–cysteine 200, cysteine 204–cysteine 282, and cysteine 302–cysteine 377. Residue asparagine 59 is glycosylated (N-linked (GlcNAc...) asparagine). The N-linked (GlcNAc...) asparagine glycan is linked to asparagine 144. The helical transmembrane segment at 213-243 (RSAKEFTDIWMAVWASLCFISTAFTVLTFLI) threads the bilayer. Residues 244–249 (DSSRFS) are Cytoplasmic-facing. The chain crosses the membrane as a helical span at residues 250–275 (YPERPIIFLSMCYNIYSIAYIVRLTV). Residues 276–299 (GRERISCDFEEAAEPVLIQEGLKN) are Extracellular-facing. The chain crosses the membrane as a helical span at residues 300 to 333 (TGCAIIFLLMYFFGMASSIWWVILTLTWFLAAGL). The Cytoplasmic segment spans residues 334–336 (KWG). The helical transmembrane segment at 337-365 (HEAIEMHSSYFHIAAWAIPAVKTIVILIM) threads the bilayer. At 366–383 (RLVDADELTGLCYVGNQN) the chain is on the extracellular side. A helical transmembrane segment spans residues 384 to 418 (LDALTGFVVAPLFTYLVIGTLFIAAGLVALFKIRS). At 419-431 (NLQKDGTKTDKLE) the chain is on the cytoplasmic side. A helical transmembrane segment spans residues 432-460 (RLMVKIGVFSVLYTVPATCVIACYFYEIS). The Extracellular segment spans residues 461 to 473 (NWALFRYSADDSN). The chain crosses the membrane as a helical span at residues 474–495 (MAVEMLKIFMSLLVGITSGMWI). Over 496 to 537 (WSAKTLHTWQKCSNRLVNSGKVKREKRGNGWVKPGKGSETVV) the chain is Cytoplasmic. The Lys-Thr-X-X-X-Trp motif, mediates interaction with the PDZ domain of Dvl family members signature appears at 499 to 504 (KTLHTW). Positions 535 to 537 (TVV) match the PDZ-binding motif.

This sequence belongs to the G-protein coupled receptor Fz/Smo family. Interacts with MAGI3 and NDP. Component of a complex, at least composed of TSPAN12, FZD4 and norrin (NDP). Interacts (via FZ domain) with TSKU; TSKU competes with WNT2B for binding to FZD4, inhibiting Wnt signaling and repressing peripheral eye development. Interacts with glypican GPC3. Post-translationally, ubiquitinated by ZNRF3, leading to its degradation by the proteasome. Almost ubiquitous. Largely expressed in adult heart, skeletal muscle, ovary, and fetal kidney. Moderate amounts in adult liver, kidney, pancreas, spleen, and fetal lung, and small amounts in placenta, adult lung, prostate, testis, colon, fetal brain and liver.

The protein resides in the cell membrane. Receptor for Wnt proteins. Most frizzled receptors are coupled to the beta-catenin (CTNNB1) canonical signaling pathway, which leads to the activation of disheveled proteins, inhibition of GSK-3 kinase, nuclear accumulation of beta-catenin (CTNNB1) and activation of Wnt target genes. Plays a critical role in retinal vascularization by acting as a receptor for Wnt proteins and norrin (NDP). In retina, it can be activated by Wnt protein-binding and also by Wnt-independent signaling via binding of norrin (NDP), promoting in both cases beta-catenin (CTNNB1) accumulation and stimulation of LEF/TCF-mediated transcriptional programs. A second signaling pathway involving PKC and calcium fluxes has been seen for some family members, but it is not yet clear if it represents a distinct pathway or if it can be integrated in the canonical pathway, as PKC seems to be required for Wnt-mediated inactivation of GSK-3 kinase. Both pathways seem to involve interactions with G-proteins. May be involved in transduction and intercellular transmission of polarity information during tissue morphogenesis and/or in differentiated tissues. The protein is Frizzled-4 (FZD4) of Homo sapiens (Human).